The chain runs to 249 residues: Small ribosomal subunit protein uS2 (249 aa).

The protein belongs to the universal ribosomal protein uS2 family.

This chain is Small ribosomal subunit protein uS2, found in Bordetella parapertussis (strain 12822 / ATCC BAA-587 / NCTC 13253).